The following is a 223-amino-acid chain: Cytidylate kinase (223 aa).

17 to 25 (GPTASGKGT) serves as a coordination point for ATP.

Belongs to the cytidylate kinase family. Type 1 subfamily.

The protein resides in the cytoplasm. The catalysed reaction is CMP + ATP = CDP + ADP. It carries out the reaction dCMP + ATP = dCDP + ADP. This Bordetella bronchiseptica (strain ATCC BAA-588 / NCTC 13252 / RB50) (Alcaligenes bronchisepticus) protein is Cytidylate kinase.